Here is a 148-residue protein sequence, read N- to C-terminus: Large ribosomal subunit protein bL9 (148 aa).

The protein belongs to the bacterial ribosomal protein bL9 family.

In terms of biological role, binds to the 23S rRNA. The protein is Large ribosomal subunit protein bL9 of Thermobifida fusca (strain YX).